A 367-amino-acid chain; its full sequence is Chorismate synthase (367 aa).

NADP(+)-binding residues include Arg-48 and Arg-54. Residues 125-127, 238-239, Gly-278, 293-297, and Arg-319 each bind FMN; these read RSS, NA, and KPTSS.

It belongs to the chorismate synthase family. In terms of assembly, homotetramer. FMNH2 is required as a cofactor.

The catalysed reaction is 5-O-(1-carboxyvinyl)-3-phosphoshikimate = chorismate + phosphate. The protein operates within metabolic intermediate biosynthesis; chorismate biosynthesis; chorismate from D-erythrose 4-phosphate and phosphoenolpyruvate: step 7/7. Functionally, catalyzes the anti-1,4-elimination of the C-3 phosphate and the C-6 proR hydrogen from 5-enolpyruvylshikimate-3-phosphate (EPSP) to yield chorismate, which is the branch point compound that serves as the starting substrate for the three terminal pathways of aromatic amino acid biosynthesis. This reaction introduces a second double bond into the aromatic ring system. In Stenotrophomonas maltophilia (strain K279a), this protein is Chorismate synthase.